Consider the following 103-residue polypeptide: Small ribosomal subunit protein uS10 (103 aa).

This sequence belongs to the universal ribosomal protein uS10 family. As to quaternary structure, part of the 30S ribosomal subunit.

Its function is as follows. Involved in the binding of tRNA to the ribosomes. This chain is Small ribosomal subunit protein uS10, found in Alcanivorax borkumensis (strain ATCC 700651 / DSM 11573 / NCIMB 13689 / SK2).